Consider the following 23-residue polypeptide: Conotoxin as25a (23 aa).

Residue Pro-4 is modified to 4-hydroxyproline; partial. 4-hydroxyproline; partial; alternate is present on Pro-23. At Pro-23 the chain carries Proline amide; alternate.

The name as25b given in PubMed:23474143 corresponds to the hydroxylated peptide. The amidation of the C-terminus of this hydroxylated peptide is not directly confirmed. Post-translationally, contains 3 disulfide bonds. In terms of tissue distribution, expressed by the venom duct.

The protein localises to the secreted. Its function is as follows. Upon intracranial injection in mice, as25a (the toxin without the two 4-hydroxyprolines) provokes paralysis of the hind limbs and death with a dose of 240 pmol. The protein is Conotoxin as25a of Conus cancellatus (Cancellate cone).